Here is a 1598-residue protein sequence, read N- to C-terminus: MADCPYARCIQERRHIRRELLRWTKNMVFVVGLERVAEELMGRRRWKQYQDTLYSGTRSSESLTAQAHHRLYPAFSSSCDPVPGNLEQIGSRPLHPPASSTSLPATITTTTTTTTTTTATAAATATTTATGLIKQETLQRHHHLQNHHHHLQSTAVQDHHRPYQQQQQQQQRQQQRQEERRLRPDEIKVEVGEDEFANGGAARDESKAGSTDASTPATVTTTGATTTLPAASATGTGPATPSAVVATSNATAAMTTGTTTIPTRRLRKRRQNDGEGADDRDDDEENEEEEDGRGQSEAEKRLKLDEDADGAVSPLRREKDRGSREYPTSNATDTDGTKERTEEVALDRTPVTQGLLRVKKEEELQEAPSCGGGPTILTTPGLDSDGIRLPCREVEAAATARNVVAPFLIGSRRTSPPPEDWKPLDKCYFCLDGKLPHDDQPPLSPQSDSSSSSRSAESPMSVQVDPMAASVVAAALTGTYPTLLPQWCLPPREAPLVGVQPHQDSATPADQPLDLSAKPKNSQDNNISLLEQQKIPLRMTAGIDPKSIFNSGYRPKPRMSGPVAAVAAAAVAAAGVGGVPVVGAGGGRRAYTEEELQAALRDIQSGKLGTRRAAVIYGIPRSTLRNKVYKLAMERERDASLSSTHSHPHEPGAPATTITTITTTTTTTTTTTTTTTTPNTTQNASATTPPPQVDEVDDKELSGAEEEKEVEKALLKPLLSLEDLVRFSTLEGSGGDSLRTLLQRGQETGAEWPGLEHANIGPYIQKMIAAAAPFKGMETQDYRIPEVMRRLMSEDKRLSKSVNGDQSQPPHQQLHHHQSTHPQAQAQAQPQQQQQQQQQQPQQQQQQQQQQQQQQRGPMTNDDFNPNIEEEASDSAQGRAILKIPSYKPASTPGCSSKNGEPTSAAFAQGFATAASSPGLLERASPAFSGTSSPTNSLVGKTVAVNFRDVIAKSISVKFQEGQTVSGGGMGGCQPGGVVQSQQPIMTDPSPFKRGRYTPPQPANAQQGQAQAQAKPQSQEANKPKPATGGKGTRPKRGKYRNYDRDSLVEAVRAVQRGEMSVHRAGSYYGVPHSTLEYKVKERHLMRPRKRDQKQSDDKTKETSTVTAAAAATNIRPGTADNKPQLKPQKPFTSPGGIPGPNGIKMPSFMEGMPHLPFTPFNFWNPPPFMPSPFMAGAPNVPTILPEQYFATSRIRGLQEQQRNAAMVQQQQQQQQQQQQQQQQQQQQQQQQQHQAREREGVGAGIAETSAGTSNSRGAAQMSKVPRDVSEGIYDGSGANGSFLDNLIRSSLETGIPRDQRAMTEARNQQQQASSQQQIPESMRSKALIDQLCRNSRRTPVPRLAQDSSEDESYRGPSASGGRPVPERPERVPTVDLSPSPSDRGRNDDGSDRLTSPPTPLSISRAGSRDEDSTRDSTKLDRSSREREVHNGGQQEDRDRKTLTSAPQQPQQQQQQQQQQQQQQQQLNHYPDLHNLYAVPTDKKSACDSKLIVDHSSQKTQQQQPQQQQQQQQQQQPQQQSQQPQQQQPQPQQQQQQQQQQQPQQQQKEYGAVSGLVVQLQRGYNSGNNRSGEQANSQQQQQQQSGEPVIGMEDSVEQ.

Disordered regions lie at residues 83 to 105 (PGNL…SLPA), 140 to 387 (RHHH…SDGI), 436 to 462 (PHDD…PMSV), and 495 to 525 (PLVG…SQDN). The span at 140–151 (RHHHLQNHHHHL) shows a compositional bias: basic residues. Positions 164 to 174 (QQQQQQQQRQQ) are enriched in low complexity. Residues 175 to 191 (QRQEERRLRPDEIKVEV) are compositionally biased toward basic and acidic residues. A compositionally biased stretch (low complexity) spans 210 to 263 (STDASTPATVTTTGATTTLPAASATGTGPATPSAVVATSNATAAMTTGTTTIPT). Residues 275 to 291 (EGADDRDDDEENEEEED) are compositionally biased toward acidic residues. Basic and acidic residues-rich tracts occupy residues 292–305 (GRGQ…LKLD), 315–324 (LRREKDRGSR), and 335–346 (DGTKERTEEVAL). Position 444 is a phosphoserine; by MAPK (Ser-444). Positions 445-461 (PQSDSSSSSRSAESPMS) are enriched in low complexity. The 53-residue stretch at 582-634 (VGAGGGRRAYTEEELQAALRDIQSGKLGTRRAAVIYGIPRSTLRNKVYKLAME) folds into the HTH psq-type 1 domain. The H-T-H motif DNA-binding region spans 610-630 (TRRAAVIYGIPRSTLRNKVYK). 6 disordered regions span residues 636 to 705 (ERDA…SGAE), 797 to 877 (RLSK…DSAQ), 962 to 1045 (GQTV…NYDR), 1082 to 1145 (ERHL…NGIK), 1248 to 1283 (ETSA…NGSF), and 1301 to 1598 (RAMT…SVEQ). The span at 653-687 (APATTITTITTTTTTTTTTTTTTTTPNTTQNASAT) shows a compositional bias: low complexity. The segment covering 694–705 (DEVDDKELSGAE) has biased composition (acidic residues). A compositionally biased stretch (low complexity) spans 820–855 (THPQAQAQAQPQQQQQQQQQQPQQQQQQQQQQQQQQ). A compositionally biased stretch (gly residues) spans 965–975 (VSGGGMGGCQP). Low complexity predominate over residues 1003 to 1021 (ANAQQGQAQAQAKPQSQEA). In terms of domain architecture, HTH psq-type 2 spans 1034 to 1086 (RPKRGKYRNYDRDSLVEAVRAVQRGEMSVHRAGSYYGVPHSTLEYKVKERHLM). Positions 1062–1082 (VHRAGSYYGVPHSTLEYKVKE) form a DNA-binding region, H-T-H motif. A compositionally biased stretch (basic and acidic residues) spans 1093–1102 (QKQSDDKTKE). Residues 1103–1120 (TSTVTAAAAATNIRPGTA) are compositionally biased toward low complexity. Positions 1309 to 1318 (QQQQASSQQQ) are enriched in low complexity. Composition is skewed to basic and acidic residues over residues 1383-1392 (DRGRNDDGSD) and 1407-1442 (GSRD…DRKT). The span at 1447–1466 (PQQPQQQQQQQQQQQQQQQQ) shows a compositional bias: low complexity. Over residues 1481–1497 (TDKKSACDSKLIVDHSS) the composition is skewed to basic and acidic residues. Over residues 1501 to 1547 (QQQQPQQQQQQQQQQQPQQQSQQPQQQQPQPQQQQQQQQQQQPQQQQ) the composition is skewed to low complexity. Polar residues predominate over residues 1562–1577 (RGYNSGNNRSGEQANS).

Homodimer. In terms of tissue distribution, large-type Kenyon cells of mushroom body.

It localises to the nucleus. In terms of biological role, transcriptional activator which binds to the consensus sequence 5'-CCCTATCGATCGATCTCTACCT-3'. May play a role in higher-order sensory processing. In Apis mellifera (Honeybee), this protein is Mushroom body large-type Kenyon cell-specific protein 1 (Mblk-1).